The chain runs to 215 residues: C-type lectin domain family 4 member D (215 aa).

Topologically, residues 1–17 (MGLEKPQSKLEGGMHPQ) are cytoplasmic. A helical; Signal-anchor for type II membrane protein transmembrane segment spans residues 18-38 (LIPSVIAVVFILLLSVCFIAS). Over 39–215 (CLVTHHNFSR…ICKIPGTTLN (177 aa)) the chain is Extracellular. Asn-45 is a glycosylation site (N-linked (GlcNAc...) asparagine). Cys-84 and Cys-95 are disulfide-bonded. Positions 91-208 (FQSNCYFPLT…CNFEASRICK (118 aa)) constitute a C-type lectin domain. 2 N-linked (GlcNAc...) asparagine glycosylation sites follow: Asn-102 and Asn-111. 2 cysteine pairs are disulfide-bonded: Cys-112-Cys-207 and Cys-182-Cys-199. 4 residues coordinate Ca(2+): Glu-173, Asp-175, Asn-195, and Asp-196.

Heterodimer with CLEC4E; disulfide-linked. CLEC4E acts as a bridge for interaction between CLEC4D and FCER1G to form a functional complex. Heterodimer with CLEC6A; this heterodimer forms a pattern recognition receptor (PRR) against fungal infection. Expressed weakly in peripheral blood leukocytes, bone marrow and spleen. Expression is confined mostly in monocytes and macrophage and seems to be up-regulated by IL-6, IL-10, TNF-alpha and IFN-gamma.

It is found in the cell membrane. Calcium-dependent lectin that acts as a pattern recognition receptor (PRR) of the innate immune system: recognizes damage-associated molecular patterns (DAMPs) of pathogen-associated molecular patterns (PAMPs) of bacteria and fungi. The PAMPs include alpha-mannans on C.albicans hypheas and mycobacterial trehalose 6,6'-dimycolate (TDM). Interacts with signaling adapter Fc receptor gamma chain/FCER1G, likely via CLEC4E, to form a functional complex in myeloid cells. Binding of mycobacterial TDM or C.albicans alpha-mannans to this receptor complex leads to phosphorylation of the immunoreceptor tyrosine-based activation motif (ITAM) of FCER1G, triggering activation of SYK, CARD9 and NF-kappa-B, consequently driving maturation of antigen-presenting cells and shaping antigen-specific priming of T-cells toward effector T-helper 1 and T-helper 17 cell subtypes. The heterodimer formed with CLEC6A is active against fungal infection. Functions as an endocytic receptor. May be involved in antigen uptake at the site of infection, either for clearance of the antigen, or for processing and further presentation to T-cells. The protein is C-type lectin domain family 4 member D of Homo sapiens (Human).